Reading from the N-terminus, the 103-residue chain is MKENVAGALSYLLGPITGILFLLMEKESQFVKFHAMQSTITFAGFWVLDIALSFIPYIGVLLIPIVGLVAFITWLVCIYKAYSNEWFKLPVVGDIAEQQIGGV.

Helical transmembrane passes span 5-25 (VAGALSYLLGPITGILFLLME), 35-55 (AMQSTITFAGFWVLDIALSFI), and 58-78 (IGVLLIPIVGLVAFITWLVCI).

It belongs to the UPF0132 family.

The protein resides in the cell membrane. This Archaeoglobus fulgidus (strain ATCC 49558 / DSM 4304 / JCM 9628 / NBRC 100126 / VC-16) protein is UPF0132 membrane protein AF_0105.